The chain runs to 330 residues: Phenylalanine--tRNA ligase alpha subunit (330 aa).

Residue glutamate 254 participates in Mg(2+) binding.

It belongs to the class-II aminoacyl-tRNA synthetase family. Phe-tRNA synthetase alpha subunit type 1 subfamily. As to quaternary structure, tetramer of two alpha and two beta subunits. Mg(2+) serves as cofactor.

It is found in the cytoplasm. The catalysed reaction is tRNA(Phe) + L-phenylalanine + ATP = L-phenylalanyl-tRNA(Phe) + AMP + diphosphate + H(+). This is Phenylalanine--tRNA ligase alpha subunit (pheS) from Neisseria meningitidis serogroup B (strain ATCC BAA-335 / MC58).